The following is a 299-amino-acid chain: Regucalcin (299 aa).

Glu-18 is a binding site for a divalent metal cation. Substrate-binding residues include Arg-101, Asn-103, and Glu-121. Lys-144 carries the post-translational modification N6-succinyllysine. The a divalent metal cation site is built by Asn-154 and Asp-204. The Proton donor/acceptor role is filled by Asp-204. An N6-succinyllysine mark is found at Lys-244 and Lys-253.

This sequence belongs to the SMP-30/CGR1 family. Monomer. Requires Zn(2+) as cofactor. Mn(2+) is required as a cofactor. Ca(2+) serves as cofactor. It depends on Mg(2+) as a cofactor. Mainly present in the liver. Weak expression was found in the brain, lung and kidney.

It localises to the cytoplasm. The catalysed reaction is D-glucono-1,5-lactone + H2O = D-gluconate + H(+). It participates in cofactor biosynthesis; L-ascorbate biosynthesis via UDP-alpha-D-glucuronate pathway; L-ascorbate from UDP-alpha-D-glucuronate: step 3/4. Functionally, gluconolactonase with low activity towards other sugar lactones, including gulonolactone and galactonolactone. Catalyzes a key step in ascorbic acid (vitamin C) biosynthesis. Can also hydrolyze diisopropyl phosphorofluoridate and phenylacetate (in vitro). Calcium-binding protein. Modulates Ca(2+) signaling, and Ca(2+)-dependent cellular processes and enzyme activities. This chain is Regucalcin (Rgn), found in Mus musculus (Mouse).